Reading from the N-terminus, the 310-residue chain is Manganese ABC transporter substrate-binding lipoprotein scaA (310 aa).

Residues 1–19 (MKKCRFLVLLLLAFVGLAA) form the signal peptide. C20 is lipidated: N-palmitoyl cysteine. C20 carries S-diacylglycerol cysteine lipidation. Residues H68, H140, E206, and D281 each coordinate Mn(2+).

The protein belongs to the bacterial solute-binding protein 9 family. Lipoprotein receptor antigen (Lrai) subfamily. In terms of assembly, the complex is composed of two ATP-binding proteins (ScaC), two transmembrane proteins (ScaB) and a solute-binding protein (ScaA).

It is found in the cell membrane. Functionally, part of ATP-binding cassette (ABC) transport system ScaABC involved in manganese import. Essential for growth under Mn(2+)-limiting conditions. Also acts as an adhesin which is involved on adherence to extracellular matrix. It is an important factor in pathogenesis and infection. This is Manganese ABC transporter substrate-binding lipoprotein scaA from Streptococcus gordonii.